The primary structure comprises 1263 residues: Histone-lysine N-methyltransferase EHMT2 (1263 aa).

2 disordered regions span residues 1 to 314 (MRGL…LEEW) and 332 to 439 (DERV…EYME). Residues 26-39 (GRGRGGAHRGRGRP) are compositionally biased toward basic residues. An Asymmetric dimethylarginine modification is found at Arg40. The span at 83 to 95 (LEKEPRGAAERVH) shows a compositional bias: basic and acidic residues. At Ser97 the chain carries Phosphoserine. Residue Thr101 is modified to Phosphothreonine. Phosphoserine is present on residues Ser104 and Ser193. At Lys239 the chain carries N6,N6,N6-trimethyllysine; by EHMT2; alternate. The residue at position 239 (Lys239) is an N6,N6-dimethyllysine; by EHMT2; alternate. The segment covering 252-270 (PEKRPPEVQHFRMSDDMHL) has biased composition (basic and acidic residues). Residues Lys272 and Lys282 each participate in a glycyl lysine isopeptide (Lys-Gly) (interchain with G-Cter in SUMO2) cross-link. Phosphoserine is present on residues Ser285, Ser294, and Ser298. Composition is skewed to basic and acidic residues over residues 302-312 (ILEKGEPRPLE) and 332-343 (DERVDSDSKSEV). Acidic residues predominate over residues 350-380 (LSEEEEEEEEEEEEEEEEEEEEEEEEEDEES). The segment covering 391-400 (GRRKAKKKWR) has biased composition (basic residues). Phosphoserine is present on residues Ser403, Ser465, and Ser466. Residue Thr608 is modified to Phosphothreonine. Positions 621 to 647 (LAHDAPGRADTSQPSARMRGHGEPRRP) are disordered. Lys687 participates in a covalent cross-link: Glycyl lysine isopeptide (Lys-Gly) (interchain with G-Cter in SUMO2). ANK repeat units lie at residues 702–731 (FHPR…DPNF), 737–766 (SKRT…NINA), 770–799 (QQRT…CVYS), 803–833 (DGST…DVNA), 837–866 (GGWT…DVTL), 870–899 (EENI…DLHA), and 903–932 (HGDT…NPEL). The histone H3K9me binding stretch occupies residues 870-872 (EEN). A Pre-SET domain is found at 1025-1088 (QHCTCVDDCS…SCKNRVVQSG (64 aa)). 9 residues coordinate Zn(2+): Cys1027, Cys1029, Cys1033, Cys1038, Cys1040, Cys1070, Cys1074, Cys1076, and Cys1080. Positions 1091–1208 (VRLQLYRTAK…TGEELGFDYG (118 aa)) constitute an SET domain. S-adenosyl-L-methionine contacts are provided by residues 1101 to 1103 (MGW), Tyr1138, and 1165 to 1166 (NH). The tract at residues 1127–1146 (DAEADVREDDSYLFDLDNKD) is interaction with histone H3. A Zn(2+)-binding site is contributed by Cys1168. Residues 1207–1210 (YGDR) are interaction with histone H3. One can recognise a Post-SET domain in the interval 1217 to 1233 (KYFTCQCGSEKCKHSAE). Zn(2+)-binding residues include Cys1221, Cys1223, and Cys1228. Ser1257 is modified (phosphoserine). At Thr1263 the chain carries Phosphothreonine.

Belongs to the class V-like SAM-binding methyltransferase superfamily. Histone-lysine methyltransferase family. Suvar3-9 subfamily. As to quaternary structure, heterodimer; heterodimerizes with EHMT1/GLP. Interacts with GFI1B and WIZ. Part of the E2F6.com-1 complex in G0 phase composed of E2F6, MGA, MAX, TFDP1, CBX3, BAT8, EHMT1, RING1, RNF2, MBLR, L3MBTL2 and YAF2. Part of a complex composed of TRIM28, HDAC1, HDAC2 and EHMT2. Interacts with UHRF1. Interacts with CDYL. Interacts with REST only in the presence of CDYL. Part of a complex containing at least CDYL, REST, WIZ, SETB1, EHMT1 and EHMT2. Interacts with PRDM9 and CDYL; interaction only takes place when PRDM9 is bound to hotspot DNA. Interacts with SMYD5. In terms of processing, methylated at Lys-239; automethylated. Ubiquitous.

The protein resides in the nucleus. Its subcellular location is the chromosome. It catalyses the reaction N(6)-methyl-L-lysyl(9)-[histone H3] + S-adenosyl-L-methionine = N(6),N(6)-dimethyl-L-lysyl(9)-[histone H3] + S-adenosyl-L-homocysteine + H(+). The catalysed reaction is L-lysyl(9)-[histone H3] + S-adenosyl-L-methionine = N(6)-methyl-L-lysyl(9)-[histone H3] + S-adenosyl-L-homocysteine + H(+). Functionally, histone methyltransferase that specifically mono- and dimethylates 'Lys-9' of histone H3 (H3K9me1 and H3K9me2, respectively) in euchromatin. H3K9me represents a specific tag for epigenetic transcriptional repression by recruiting HP1 proteins to methylated histones. Also mediates monomethylation of 'Lys-56' of histone H3 (H3K56me1) in G1 phase, leading to promote interaction between histone H3 and PCNA and regulating DNA replication. Also weakly methylates 'Lys-27' of histone H3 (H3K27me). Also required for DNA methylation, the histone methyltransferase activity is not required for DNA methylation, suggesting that these 2 activities function independently. Probably targeted to histone H3 by different DNA-binding proteins like E2F6, MGA, MAX and/or DP1. May also methylate histone H1. In addition to the histone methyltransferase activity, also methylates non-histone proteins: mediates dimethylation of 'Lys-373' of p53/TP53. Also methylates CDYL, WIZ, ACIN1, DNMT1, HDAC1, ERCC6, KLF12 and itself. The polypeptide is Histone-lysine N-methyltransferase EHMT2 (Ehmt2) (Mus musculus (Mouse)).